Reading from the N-terminus, the 335-residue chain is Biotin synthase (335 aa).

A disordered region spans residues 1–20 (MVSVGTQSHSGRDQAEQNPS). The Radical SAM core domain occupies 59–284 (GHLQKSSLLS…MMPQSMVRLS (226 aa)). [4Fe-4S] cluster is bound by residues C74, C78, and C81. [2Fe-2S] cluster contacts are provided by C118, C150, C210, and R282.

The protein belongs to the radical SAM superfamily. Biotin synthase family. As to quaternary structure, homodimer. Requires [4Fe-4S] cluster as cofactor. [2Fe-2S] cluster is required as a cofactor.

It catalyses the reaction (4R,5S)-dethiobiotin + (sulfur carrier)-SH + 2 reduced [2Fe-2S]-[ferredoxin] + 2 S-adenosyl-L-methionine = (sulfur carrier)-H + biotin + 2 5'-deoxyadenosine + 2 L-methionine + 2 oxidized [2Fe-2S]-[ferredoxin]. The protein operates within cofactor biosynthesis; biotin biosynthesis; biotin from 7,8-diaminononanoate: step 2/2. In terms of biological role, catalyzes the conversion of dethiobiotin (DTB) to biotin by the insertion of a sulfur atom into dethiobiotin via a radical-based mechanism. The polypeptide is Biotin synthase (Zymomonas mobilis subsp. mobilis (strain ATCC 31821 / ZM4 / CP4)).